The chain runs to 209 residues: Protease (209 aa).

Residues histidine 60, aspartate 77, and cysteine 127 contribute to the active site.

This sequence belongs to the peptidase C5 family. Interacts with protease cofactor pVI-C; this interaction is necessary for protease activation.

It is found in the virion. It localises to the host nucleus. The enzyme catalyses Cleaves proteins of the adenovirus and its host cell at two consensus sites: -Yaa-Xaa-Gly-Gly-|-Xaa- and -Yaa-Xaa-Gly-Xaa-|-Gly- (in which Yaa is Met, Ile or Leu, and Xaa is any amino acid).. Requires DNA and protease cofactor for maximal activation. Inside nascent virions, becomes partially activated by binding to the viral DNA, allowing it to cleave the cofactor that binds to the protease and fully activates it. Actin, like the viral protease cofactor, seems to act as a cofactor in the cleavage of cytokeratin 18 and of actin itself. In terms of biological role, cleaves viral precursor proteins (pTP, pIIIa, pVI, pVII, pVIII, and pX) inside newly assembled particles giving rise to mature virions. Protease complexed to its cofactor slides along the viral DNA to specifically locate and cleave the viral precursors. Mature virions have a weakened organization compared to the unmature virions, thereby facilitating subsequent uncoating. Without maturation, the particle lacks infectivity and is unable to uncoat. Late in adenovirus infection, in the cytoplasm, may participate in the cytoskeleton destruction. Cleaves host cell cytoskeletal keratins K7 and K18. This is Protease from Homo sapiens (Human).